The sequence spans 163 residues: NADH-quinone oxidoreductase subunit I (163 aa).

4Fe-4S ferredoxin-type domains are found at residues 54 to 84 and 94 to 123; these read LRRYPNGEERCIACKLCEAVCPANAITIESE and IVYDIDLFKCIFCGFCEEACPVDAIVETQI. [4Fe-4S] cluster-binding residues include Cys64, Cys67, Cys70, Cys74, Cys103, Cys106, Cys109, and Cys113.

The protein belongs to the complex I 23 kDa subunit family. NDH-1 is composed of 14 different subunits. Subunits NuoA, H, J, K, L, M, N constitute the membrane sector of the complex. Requires [4Fe-4S] cluster as cofactor.

Its subcellular location is the cell inner membrane. It carries out the reaction a quinone + NADH + 5 H(+)(in) = a quinol + NAD(+) + 4 H(+)(out). NDH-1 shuttles electrons from NADH, via FMN and iron-sulfur (Fe-S) centers, to quinones in the respiratory chain. The immediate electron acceptor for the enzyme in this species is believed to be ubiquinone. Couples the redox reaction to proton translocation (for every two electrons transferred, four hydrogen ions are translocated across the cytoplasmic membrane), and thus conserves the redox energy in a proton gradient. This chain is NADH-quinone oxidoreductase subunit I, found in Ruthia magnifica subsp. Calyptogena magnifica.